A 200-amino-acid polypeptide reads, in one-letter code: Max dimerization protein 3 (200 aa).

Disordered stretches follow at residues 26 to 56 (EHGY…DNVR) and 134 to 164 (LLPP…QEDL). The region spanning 54–106 (NVRSVHNELEKHRRAQLRRCLEQLKQQVPLSMENSRHTTLSLLHRAKQHIKKL) is the bHLH domain.

As to quaternary structure, efficient DNA binding requires dimerization with another bHLH protein. Binds DNA as a heterodimer with MAX.

It is found in the nucleus. Transcriptional repressor. Binds with MAX to form a sequence-specific DNA-binding protein complex which recognizes the core sequence 5'-CAC[GA]TG-3'. The polypeptide is Max dimerization protein 3 (mxd3) (Xenopus tropicalis (Western clawed frog)).